A 460-amino-acid polypeptide reads, in one-letter code: Argininosuccinate lyase (460 aa).

The protein belongs to the lyase 1 family. Argininosuccinate lyase subfamily.

The protein resides in the cytoplasm. It catalyses the reaction 2-(N(omega)-L-arginino)succinate = fumarate + L-arginine. It participates in amino-acid biosynthesis; L-arginine biosynthesis; L-arginine from L-ornithine and carbamoyl phosphate: step 3/3. The protein is Argininosuccinate lyase of Lacticaseibacillus paracasei (strain ATCC 334 / BCRC 17002 / CCUG 31169 / CIP 107868 / KCTC 3260 / NRRL B-441) (Lactobacillus paracasei).